A 188-amino-acid polypeptide reads, in one-letter code: Thymidine kinase (188 aa).

17 to 24 (GPMFAGKT) serves as a coordination point for ATP. Glu-92 (proton acceptor) is an active-site residue. Substrate is bound at residue Phe-121. Residues Cys-146 and Cys-149 each coordinate Zn(2+). Residue 166-170 (LILAG) coordinates substrate. Cys-179 and Cys-182 together coordinate Zn(2+).

This sequence belongs to the thymidine kinase family.

The enzyme catalyses thymidine + ATP = dTMP + ADP + H(+). Phosphorylates thymidine. ASFV replicates in the cytoplasm of infected cells and contains genes encoding a number of enzymes needed for DNA synthesis, including thymidine kinase. Important for growth in swine macrophages in vitro and is a virus virulence factor in swine. The sequence is that of Thymidine kinase from African swine fever virus (isolate Tick/South Africa/Pretoriuskop Pr4/1996) (ASFV).